The sequence spans 563 residues: Probable trehalase (563 aa).

Residues arginine 154, 161–162, asparagine 198, 207–209, 274–276, and glycine 307 each bind substrate; these read WD, RSQ, and RPE. Residues aspartate 309 and glutamate 517 each act as proton donor/acceptor in the active site. Glutamate 532 serves as a coordination point for substrate.

The protein belongs to the glycosyl hydrolase 37 family.

The catalysed reaction is alpha,alpha-trehalose + H2O = alpha-D-glucose + beta-D-glucose. In terms of biological role, involved in the regulation of trehalose content by hydrolyzing trehalose to glucose. This Oryza sativa subsp. japonica (Rice) protein is Probable trehalase.